A 598-amino-acid chain; its full sequence is Ceramide transfer protein (598 aa).

Polar residues predominate over residues 1 to 11; that stretch reads MSDNQSWNSSG. The disordered stretch occupies residues 1–24; sequence MSDNQSWNSSGSEEDPETESGPPV. One can recognise a PH domain in the interval 23–117; the sequence is PVERCGVLSK…WIDAIEQHKT (95 aa). Residue Ser-126 is modified to Phosphoserine. Ser-132 is modified (phosphoserine; by PKD). Ser-135 carries the phosphoserine modification. Residues 202-221 are disordered; that stretch reads DDEDDFPTTRSDGDFLHNTN. A coiled-coil region spans residues 268–301; it reads KREESWQKRHDKEMEKRRRLEEAYKNAMAELKKK. Ser-315 is subject to Phosphoserine. An FFAT motif is present at residues 321–327; the sequence is EFFDAVE. Residues 363–592 enclose the START domain; sequence GTHRFVQKVE…FTSYVQEKTA (230 aa). Residues Glu-446, Gln-467, Asn-504, and Tyr-553 each coordinate an N-acylsphing-4-enine.

In terms of assembly, interacts with VAPA and VAPB. Interaction with VAPB is less efficient than with VAPA. Interacts (via FFAT motif) with the MOSPD2 (via MSP domain). Post-translationally, phosphorylation on Ser-132 decreases the affinity toward phosphatidylinositol 4-phosphate at Golgi membranes and reduces ceramide transfer activity. Inactivated by hyperphosphorylation of serine residues by CSNK1G2/CK1 that triggers dissociation from the Golgi complex, thus down-regulating ER-to-Golgi transport of ceramide and sphingomyelin synthesis.

Its subcellular location is the cytoplasm. The protein localises to the golgi apparatus. It localises to the endoplasmic reticulum. It catalyses the reaction N-hexadecanoylsphing-4-enine(in) = N-hexadecanoylsphing-4-enine(out). Functionally, shelters ceramides and diacylglycerol lipids inside its START domain and mediates the intracellular trafficking of ceramides and diacylglycerol lipids in a non-vesicular manner. The protein is Ceramide transfer protein (CERT1) of Cricetulus griseus (Chinese hamster).